We begin with the raw amino-acid sequence, 567 residues long: 2-succinyl-5-enolpyruvyl-6-hydroxy-3-cyclohexene-1-carboxylate synthase (567 aa).

Belongs to the TPP enzyme family. MenD subfamily. As to quaternary structure, homodimer. Requires Mg(2+) as cofactor. Mn(2+) serves as cofactor. The cofactor is thiamine diphosphate.

It carries out the reaction isochorismate + 2-oxoglutarate + H(+) = 5-enolpyruvoyl-6-hydroxy-2-succinyl-cyclohex-3-ene-1-carboxylate + CO2. It participates in quinol/quinone metabolism; 1,4-dihydroxy-2-naphthoate biosynthesis; 1,4-dihydroxy-2-naphthoate from chorismate: step 2/7. The protein operates within quinol/quinone metabolism; menaquinone biosynthesis. In terms of biological role, catalyzes the thiamine diphosphate-dependent decarboxylation of 2-oxoglutarate and the subsequent addition of the resulting succinic semialdehyde-thiamine pyrophosphate anion to isochorismate to yield 2-succinyl-5-enolpyruvyl-6-hydroxy-3-cyclohexene-1-carboxylate (SEPHCHC). This is 2-succinyl-5-enolpyruvyl-6-hydroxy-3-cyclohexene-1-carboxylate synthase from Yersinia pseudotuberculosis serotype IB (strain PB1/+).